We begin with the raw amino-acid sequence, 432 residues long: MGNNVVVLGTQWGDEGKGKIVDLLTERAKYVVRYQGGHNAGHTLVINGEKTVLHLIPSGILRENVTSIIGNGVVLSPSALMKEMKELEDRGIPVRERLLLSEACPLILDYHVALDNAREKARGAKAIGTTGRGIGPAYEDKVARRGLRVGDLFDKETFAEKLKEVMEYHNFQLVNYYKAEAVDYQKVLDDTMAVADILTSMVVDVSDLLDQARQRGDFVMFEGAQGTLLDIDHGTYPYVTSSNTTAGGVATGSGLGPRYVDYVLGILKAYSTRVGAGPFPTELFDETGEFLCKQGNEYGATTGRRRRTGWLDTVAVRRAVQLNSLSGFCLTKLDVLDGLKEVKLCVAYRMPDGREVTTTPLAADDWKGVEPIYETMPGWSESTFGVKDRSGLPQAALNYIKRIEELTGVPIDIISTGPDRTETMILRDPFDA.

Residues 13–19 and 41–43 contribute to the GTP site; these read GDEGKGK and GHT. Aspartate 14 functions as the Proton acceptor in the catalytic mechanism. Aspartate 14 and glycine 41 together coordinate Mg(2+). IMP contacts are provided by residues 14–17, 39–42, threonine 130, arginine 144, glutamine 225, threonine 240, and arginine 304; these read DEGK and NAGH. Histidine 42 acts as the Proton donor in catalysis. 300-306 is a substrate binding site; that stretch reads ATTGRRR. GTP contacts are provided by residues arginine 306, 332-334, and 415-417; these read KLD and STG.

Belongs to the adenylosuccinate synthetase family. Homodimer. Mg(2+) is required as a cofactor.

It localises to the cytoplasm. It catalyses the reaction IMP + L-aspartate + GTP = N(6)-(1,2-dicarboxyethyl)-AMP + GDP + phosphate + 2 H(+). It functions in the pathway purine metabolism; AMP biosynthesis via de novo pathway; AMP from IMP: step 1/2. Its function is as follows. Plays an important role in the de novo pathway of purine nucleotide biosynthesis. Catalyzes the first committed step in the biosynthesis of AMP from IMP. This is Adenylosuccinate synthetase from Salmonella typhi.